We begin with the raw amino-acid sequence, 689 residues long: Glycine--tRNA ligase beta subunit (689 aa).

This sequence belongs to the class-II aminoacyl-tRNA synthetase family. As to quaternary structure, tetramer of two alpha and two beta subunits.

It localises to the cytoplasm. It catalyses the reaction tRNA(Gly) + glycine + ATP = glycyl-tRNA(Gly) + AMP + diphosphate. This Hamiltonella defensa subsp. Acyrthosiphon pisum (strain 5AT) protein is Glycine--tRNA ligase beta subunit.